The chain runs to 224 residues: Deoxyribose-phosphate aldolase (224 aa).

Residue Asp92 is the Proton donor/acceptor of the active site. The Schiff-base intermediate with acetaldehyde role is filled by Lys155. Lys184 acts as the Proton donor/acceptor in catalysis.

It belongs to the DeoC/FbaB aldolase family. DeoC type 1 subfamily.

The protein resides in the cytoplasm. It carries out the reaction 2-deoxy-D-ribose 5-phosphate = D-glyceraldehyde 3-phosphate + acetaldehyde. It functions in the pathway carbohydrate degradation; 2-deoxy-D-ribose 1-phosphate degradation; D-glyceraldehyde 3-phosphate and acetaldehyde from 2-deoxy-alpha-D-ribose 1-phosphate: step 2/2. Functionally, catalyzes a reversible aldol reaction between acetaldehyde and D-glyceraldehyde 3-phosphate to generate 2-deoxy-D-ribose 5-phosphate. The sequence is that of Deoxyribose-phosphate aldolase from Shouchella clausii (strain KSM-K16) (Alkalihalobacillus clausii).